A 724-amino-acid chain; its full sequence is Ribosomal RNA large subunit methyltransferase K/L (724 aa).

The 112-residue stretch at 42 to 153 (DAQRLVLWSR…KGRATLSVDL (112 aa)) folds into the THUMP domain.

Belongs to the methyltransferase superfamily. RlmKL family.

It localises to the cytoplasm. The enzyme catalyses guanosine(2445) in 23S rRNA + S-adenosyl-L-methionine = N(2)-methylguanosine(2445) in 23S rRNA + S-adenosyl-L-homocysteine + H(+). It catalyses the reaction guanosine(2069) in 23S rRNA + S-adenosyl-L-methionine = N(2)-methylguanosine(2069) in 23S rRNA + S-adenosyl-L-homocysteine + H(+). Its function is as follows. Specifically methylates the guanine in position 2445 (m2G2445) and the guanine in position 2069 (m7G2069) of 23S rRNA. The polypeptide is Ribosomal RNA large subunit methyltransferase K/L (Xylella fastidiosa (strain 9a5c)).